Reading from the N-terminus, the 1100-residue chain is Lysylphosphatidylglycerol biosynthesis bifunctional protein LysX (1100 aa).

The interval M1–D601 is phosphatidylglycerol lysyltransferase. The next 7 helical transmembrane spans lie at V18–V38, F60–A80, I84–L104, F112–L132, L154–G174, V206–V226, and A314–F332. The lysine--tRNA ligase stretch occupies residues G602–R1100. The OB DNA-binding region spans V661–I739. The Mg(2+) site is built by D1012 and E1019.

The protein in the N-terminal section; belongs to the LPG synthetase family. It in the C-terminal section; belongs to the class-II aminoacyl-tRNA synthetase family. Requires Mg(2+) as cofactor.

The protein localises to the cell membrane. It carries out the reaction tRNA(Lys) + L-lysine + ATP = L-lysyl-tRNA(Lys) + AMP + diphosphate. It catalyses the reaction L-lysyl-tRNA(Lys) + a 1,2-diacyl-sn-glycero-3-phospho-(1'-sn-glycerol) = a 1,2-diacyl-sn-glycero-3-phospho-1'-(3'-O-L-lysyl)-sn-glycerol + tRNA(Lys). Catalyzes the production of L-lysyl-tRNA(Lys)transfer and the transfer of a lysyl group from L-lysyl-tRNA(Lys) to membrane-bound phosphatidylglycerol (PG), which produces lysylphosphatidylglycerol (LPG), one of the components of the bacterial membrane with a positive net charge. LPG synthesis contributes to the resistance to cationic antimicrobial peptides (CAMPs) and likely protects M.tuberculosis against the CAMPs produced by competiting microorganisms (bacteriocins). In fact, the modification of anionic phosphatidylglycerol with positively charged L-lysine results in repulsion of the peptides. In Mycolicibacterium vanbaalenii (strain DSM 7251 / JCM 13017 / BCRC 16820 / KCTC 9966 / NRRL B-24157 / PYR-1) (Mycobacterium vanbaalenii), this protein is Lysylphosphatidylglycerol biosynthesis bifunctional protein LysX (lysX).